A 137-amino-acid polypeptide reads, in one-letter code: Dormancy-associated protein homolog 3 (137 aa).

2 disordered regions span residues 1–55 (MGLL…DSLP) and 69–137 (KPPG…TYGM). Polar residues predominate over residues 32-43 (FRPSSGNDQSEA). Low complexity predominate over residues 70–87 (PPGYQGSSAPASPAGSTP). Ser81 is modified (phosphoserine). Pro residues predominate over residues 88 to 97 (PLSPFSPPLS). The span at 104–118 (EPFRFRRRSTSDAFE) shows a compositional bias: basic and acidic residues. Residues 127–137 (GPRSSPPTYGM) show a composition bias toward polar residues.

This sequence belongs to the DRM1/ARP family.

The polypeptide is Dormancy-associated protein homolog 3 (Arabidopsis thaliana (Mouse-ear cress)).